Reading from the N-terminus, the 397-residue chain is Phosphoglycerate kinase (397 aa).

Residues 21–23 (DFN), Arg37, 60–63 (HLGR), Arg119, and Arg152 contribute to the substrate site. ATP-binding positions include Lys203, Gly294, Glu325, and 354–357 (GGDS).

Belongs to the phosphoglycerate kinase family. Monomer.

Its subcellular location is the cytoplasm. The catalysed reaction is (2R)-3-phosphoglycerate + ATP = (2R)-3-phospho-glyceroyl phosphate + ADP. Its pathway is carbohydrate degradation; glycolysis; pyruvate from D-glyceraldehyde 3-phosphate: step 2/5. The chain is Phosphoglycerate kinase from Chlorobium phaeovibrioides (strain DSM 265 / 1930) (Prosthecochloris vibrioformis (strain DSM 265)).